The sequence spans 1499 residues: ABC multidrug transporter A-2 (1499 aa).

2 disordered regions span residues 1 to 66 (MAMQ…IDQE) and 80 to 107 (QISQKSAGPTNTFLDPSSDPELDPNSDK). Residues 16-30 (ISSSAGQEVASTIRR) show a composition bias toward polar residues. The segment covering 31–51 (QFTDADADRIVETPLGEKADS) has biased composition (basic and acidic residues). Polar residues predominate over residues 80–94 (QISQKSAGPTNTFLD). The ABC transporter 1 domain occupies 166-415 (LRSILGCRNR…FIDMGFDCPD (250 aa)). N-linked (GlcNAc...) asparagine glycosylation is present at Asn-339. 5 helical membrane-spanning segments follow: residues 526 to 546 (MTLATVIGNSIMAFIVSSVFY), 561 to 581 (LLFFAILLNAFASSLEILTLW), 606 to 626 (MIVDLPSKFLVSVVFNLILYF), 635 to 655 (GHFFVFYLFSVTITLTMSNIF), and 669 to 689 (MVPSSIFMMILVIYTGFTIPV). Asn-763 is a glycosylation site (N-linked (GlcNAc...) asparagine). A helical transmembrane segment spans residues 778–798 (GIILGFFFFFLAAYIICSELV). One can recognise an ABC transporter 2 domain in the interval 857–1100 (FHWQDVCYDI…LIKYFENKGS (244 aa)). 893 to 900 (GVTGAGKT) contacts ATP. Transmembrane regions (helical) follow at residues 1193 to 1213 (YIYSKAATSIIPPLFIGFTFW), 1227 to 1247 (FAIFMLLVIFPNLVQQMMPYF), 1268 to 1288 (AFMLASILVELPWNILMAVPA), 1317 to 1337 (LLILIFMMFTSTFSSMIIAGI), and 1353 to 1373 (LCLIFNGVLASPSALPGFWIF). Asn-1414 is a glycosylation site (N-linked (GlcNAc...) asparagine). Residues 1466 to 1486 (GLLFVYIVFNIFAAIFLYWLI) traverse the membrane as a helical segment.

The protein belongs to the ABC transporter superfamily. ABCG family. PDR (TC 3.A.1.205) subfamily.

It localises to the cell membrane. The enzyme catalyses itraconazole(in) + ATP + H2O = itraconazole(out) + ADP + phosphate + H(+). It catalyses the reaction voriconazole(in) + ATP + H2O = voriconazole(out) + ADP + phosphate + H(+). Its activity is regulated as follows. The efflux inhibitor FK506 impairs the transport activity. Functionally, pleiotropic ABC efflux transporter that confers resistance to structurally and functionally unrelated compounds including azoles such as itraconazole, posaconazole, and voriconazole. The chain is ABC multidrug transporter A-2 from Aspergillus fumigatus (strain ATCC MYA-4609 / CBS 101355 / FGSC A1100 / Af293) (Neosartorya fumigata).